Reading from the N-terminus, the 512-residue chain is MSLSEPIFRMEGISKRYGGAIALKDADIAIRRGAIHAVLGENGAGKSTLIKIMAGVVTPDEGRMLLDGREIAFASPAAANAVGIVCVFQELSLIPDLSVADNITISHPPQRFGMIDRRAQRRIAEEALTRAGASDIHPSILVKDLPLSRRQMVEIAKALARKPRLIILDEATSALTRSDVEKVFAVLKRLRAEGMALIYISHRMHEIAQLADDCTVFRNGRSIESYPAGTKTDQQVVELMIGREYNNVFPPKPAHRPEEKPILSCRELSWGDRLSGITFDIRPGEVVGLGGLDGQGQRDLLLAFFGVLRDLKGEIAIDGTQVKLRSPRHAKSGGISMALIPEDRKTEGLMLPMTVRENLSIAALDRISRNGVIDRAAERREIDDLFKLLAIKAATIDMPVAGLSGGNQQKVVIAKWLMNRPRIILLNDPTRGIDVGTKQEIYLLLRKLADGGAAIIFYSTDYDELIGCCDRVLVMYDGSIVRELEGADINEHELIGAALNIGGEHAQQRIAP.

ABC transporter domains are found at residues 8 to 244 (FRME…IGRE) and 257 to 502 (PEEK…LNIG). Position 40–47 (40–47 (GENGAGKS)) interacts with ATP.

This sequence belongs to the ABC transporter superfamily. Ribose importer (TC 3.A.1.2.1) family. In terms of assembly, the complex is composed of an ATP-binding protein (RbsA), two transmembrane proteins (RbsC) and a solute-binding protein (RbsB).

The protein localises to the cell inner membrane. It carries out the reaction D-ribose(out) + ATP + H2O = D-ribose(in) + ADP + phosphate + H(+). Functionally, part of the ABC transporter complex RbsABC involved in ribose import. Responsible for energy coupling to the transport system. This chain is Ribose import ATP-binding protein RbsA 1, found in Rhizobium etli (strain ATCC 51251 / DSM 11541 / JCM 21823 / NBRC 15573 / CFN 42).